Reading from the N-terminus, the 128-residue chain is Glycine cleavage system H protein (128 aa).

The 83-residue stretch at 24–106 folds into the Lipoyl-binding domain; that stretch reads LVRIGISEFA…HGEGWLLIIR (83 aa). Lys65 is subject to N6-lipoyllysine.

The protein belongs to the GcvH family. In terms of assembly, the glycine cleavage system is composed of four proteins: P, T, L and H. It depends on (R)-lipoate as a cofactor.

In terms of biological role, the glycine cleavage system catalyzes the degradation of glycine. The H protein shuttles the methylamine group of glycine from the P protein to the T protein. This Prochlorococcus marinus (strain NATL2A) protein is Glycine cleavage system H protein.